The primary structure comprises 489 residues: Dipeptide and tripeptide permease B (489 aa).

Topologically, residues 1 to 27 (MNTTTPMGMLQQPRPFFMIFFVELWER) are cytoplasmic. A helical transmembrane segment spans residues 28–48 (FGYYGVQGVLAVFFVKQLGFS). Topologically, residues 49-52 (QEQA) are periplasmic. A helical transmembrane segment spans residues 53-73 (FVTFGAFAALVYGLISIGGYV). The Cytoplasmic segment spans residues 74–82 (GDHLLGTKR). A helical membrane pass occupies residues 83–103 (TIVLGALVLAIGYFMTGLSLL). The Periplasmic segment spans residues 104–106 (KPD). Residues 107–127 (LIFIALGTIAVGNGLFKANPA) traverse the membrane as a helical segment. The Cytoplasmic segment spans residues 128–146 (SLLSKCYPPKAPRLDGAFT). A helical membrane pass occupies residues 147-167 (LFYMSINIGSLIALSLAPVIA). The Periplasmic portion of the chain corresponds to 168–172 (DRFGY). The chain crosses the membrane as a helical span at residues 173 to 193 (SVTYNLCGAGLIIALLVYIAC). The Cytoplasmic portion of the chain corresponds to 194–210 (RGMVKDIGSEPDFRPMS). Residues 211 to 231 (FSKLLYVLLGSVVMIFVCAWL) form a helical membrane-spanning segment. The Periplasmic portion of the chain corresponds to 232–233 (MH). The chain crosses the membrane as a helical span at residues 234–254 (NVEVANLVLIVLSIVVTIIFF). Residues 255–267 (RQAFKLDKTGRNK) lie on the Cytoplasmic side of the membrane. A helical transmembrane segment spans residues 268-288 (MFVAFVLMLEAVVFYILYAQM). Residues 289 to 311 (PTSLNFFAINNVHHEILGFSINP) are Periplasmic-facing. Residues 312 to 332 (VSFQALNPFWVVLASPILAGI) traverse the membrane as a helical segment. The Cytoplasmic portion of the chain corresponds to 333 to 350 (YTHLGSKGKDLSMPMKFT). A helical membrane pass occupies residues 351–371 (LGMFMCSLGFLTAAAAGMWFA). At 372 to 380 (DAQGLTSPW) the chain is on the periplasmic side. The chain crosses the membrane as a helical span at residues 381 to 401 (FIVLVYLFQSLGELFISALGL). The Cytoplasmic segment spans residues 402 to 411 (AMVAALVPQH). The chain crosses the membrane as a helical span at residues 412–432 (LMGFILGISFLTQAAAFLLGG). At 433–456 (YVATFTAVPDNITDPLETLPVYTN) the chain is on the periplasmic side. The chain crosses the membrane as a helical span at residues 457 to 477 (VFGKIGLVTLGVAVVMLLMVP). At 478-489 (WLKRMIAAPESH) the chain is on the cytoplasmic side.

The protein belongs to the major facilitator superfamily. Proton-dependent oligopeptide transporter (POT/PTR) (TC 2.A.17) family. DtpB subfamily.

It localises to the cell inner membrane. Proton-dependent permease that transports di- and tripeptides. The polypeptide is Dipeptide and tripeptide permease B (Shigella dysenteriae serotype 1 (strain Sd197)).